The chain runs to 239 residues: Glucosamine-6-phosphate deaminase (239 aa).

Catalysis depends on aspartate 62, which acts as the Proton acceptor; for enolization step. Residue asparagine 128 is the For ring-opening step of the active site. The active-site Proton acceptor; for ring-opening step is histidine 130. Glutamate 135 acts as the For ring-opening step in catalysis.

It belongs to the glucosamine/galactosamine-6-phosphate isomerase family. NagB subfamily.

The catalysed reaction is alpha-D-glucosamine 6-phosphate + H2O = beta-D-fructose 6-phosphate + NH4(+). The protein operates within amino-sugar metabolism; N-acetylneuraminate degradation; D-fructose 6-phosphate from N-acetylneuraminate: step 5/5. Catalyzes the reversible isomerization-deamination of glucosamine 6-phosphate (GlcN6P) to form fructose 6-phosphate (Fru6P) and ammonium ion. This is Glucosamine-6-phosphate deaminase from Lactobacillus johnsonii (strain CNCM I-12250 / La1 / NCC 533).